The following is a 340-amino-acid chain: uncharacterized protein (340 aa).

A signal peptide spans 1–23 (MQKKVLSLVLVLAVLESIVPVSA).

This is an uncharacterized protein from Archaeoglobus fulgidus (strain ATCC 49558 / DSM 4304 / JCM 9628 / NBRC 100126 / VC-16).